The chain runs to 263 residues: uncharacterized protein (263 aa).

An ATP-binding site is contributed by 31-38 (GPTGSGKT).

The protein belongs to the CbbQ/NirQ/NorQ/GpvN family.

This is an uncharacterized protein from Staphylococcus saprophyticus subsp. saprophyticus (strain ATCC 15305 / DSM 20229 / NCIMB 8711 / NCTC 7292 / S-41).